Reading from the N-terminus, the 425-residue chain is Enolase (425 aa).

Residue Gln-163 participates in (2R)-2-phosphoglycerate binding. The active-site Proton donor is Glu-205. Mg(2+)-binding residues include Asp-242, Glu-285, and Asp-312. (2R)-2-phosphoglycerate contacts are provided by Lys-337, Arg-366, Ser-367, and Lys-388. Lys-337 acts as the Proton acceptor in catalysis.

Belongs to the enolase family. Mg(2+) serves as cofactor.

The protein resides in the cytoplasm. It is found in the secreted. The protein localises to the cell surface. It catalyses the reaction (2R)-2-phosphoglycerate = phosphoenolpyruvate + H2O. It functions in the pathway carbohydrate degradation; glycolysis; pyruvate from D-glyceraldehyde 3-phosphate: step 4/5. Functionally, catalyzes the reversible conversion of 2-phosphoglycerate (2-PG) into phosphoenolpyruvate (PEP). It is essential for the degradation of carbohydrates via glycolysis. The protein is Enolase of Rhodospirillum rubrum (strain ATCC 11170 / ATH 1.1.1 / DSM 467 / LMG 4362 / NCIMB 8255 / S1).